The chain runs to 174 residues: Phospholipase A2-like protein Y52B11A.8 (174 aa).

Residues 1–18 (MRGLLVATWIFVSVAASA) form the signal peptide. N-linked (GlcNAc...) asparagine glycosylation is found at Asn49 and Asn143. A disordered region spans residues 137-174 (YEASGPNASTTEESPAEKDDYDYESHVAGLNATPSSST).

Belongs to the phospholipase A2 family.

It is found in the secreted. The polypeptide is Phospholipase A2-like protein Y52B11A.8 (Caenorhabditis elegans).